The chain runs to 65 residues: uncharacterized protein (65 aa).

This is an uncharacterized protein from Rhizobium fredii (Sinorhizobium fredii).